A 243-amino-acid polypeptide reads, in one-letter code: NifU-like scaffold protein (243 aa).

Belongs to the NifU family. Homodimer.

Its subcellular location is the plastid. It is found in the apicoplast. It functions in the pathway cofactor biosynthesis; iron-sulfur cluster biosynthesis. Binds and transfers [4Fe-4S] iron-sulfur clusters to target proteins. The sequence is that of NifU-like scaffold protein from Plasmodium berghei (strain Anka).